We begin with the raw amino-acid sequence, 471 residues long: 3-isopropylmalate dehydratase large subunit (471 aa).

[4Fe-4S] cluster-binding residues include cysteine 347, cysteine 409, and cysteine 412.

Belongs to the aconitase/IPM isomerase family. LeuC type 1 subfamily. Heterodimer of LeuC and LeuD. It depends on [4Fe-4S] cluster as a cofactor.

It carries out the reaction (2R,3S)-3-isopropylmalate = (2S)-2-isopropylmalate. Its pathway is amino-acid biosynthesis; L-leucine biosynthesis; L-leucine from 3-methyl-2-oxobutanoate: step 2/4. In terms of biological role, catalyzes the isomerization between 2-isopropylmalate and 3-isopropylmalate, via the formation of 2-isopropylmaleate. This chain is 3-isopropylmalate dehydratase large subunit, found in Buchnera aphidicola subsp. Rhopalosiphum padi.